Reading from the N-terminus, the 3414-residue chain is Hemocyanin 1 (3414 aa).

The N-terminal stretch at 1-16 (MLSVRLLIVVLALANA) is a signal peptide. Residue glutamate 17 coordinates a divalent metal cation. Positions 17 to 437 (ENLVRKSVEH…PPVKHHQSAN (421 aa)) are functional unit a (wall). Histidine 58 lines the Cu cation pocket. The cysteines at positions 64 and 73 are disulfide-linked. The segment at residues 74–76 (CIH) is a cross-link (2'-(S-cysteinyl)-histidine (Cys-His)). Cu cation-binding residues include histidine 76, histidine 85, histidine 195, histidine 199, and histidine 226. Cysteine 185 and cysteine 252 are joined by a disulfide. The 2'-(S-cysteinyl)-histidine (Cys-His) cross-link spans 287-290 (CELH). Cysteines 339 and 351 form a disulfide. N-linked (GlcNAc...) asparagine glycosylation is present at asparagine 403. Residues 438–851 (LLVRKNINDL…RVKFDKVPRS (414 aa)) form a functional unit b (wall) region. Histidine 478 is a Cu cation binding site. Cysteine 484 and cysteine 495 are disulfide-bonded. A cross-link (2'-(S-cysteinyl)-histidine (Cys-His)) is located at residues 496-498 (CVH). Cu cation-binding residues include histidine 498 and histidine 507. Asparagine 545 carries N-linked (GlcNAc...) asparagine glycosylation. A disulfide bridge links cysteine 608 with cysteine 674. Residues histidine 618, histidine 622, and histidine 649 each contribute to the Cu cation site. The WD 1 repeat unit spans residues 628–669 (SEHFSMSSLHYTAFDPLFYFHHSNVDRLWAVWQALQMRRHKP). Glutamate 737 is an a divalent metal cation binding site. The interval 852-1271 (RLIRKNVDRL…EVYQAEVTSA (420 aa)) is functional unit c (wall). Residue histidine 892 coordinates Cu cation. A disulfide bridge connects residues cysteine 898 and cysteine 909. The segment at residues 910 to 912 (CVH) is a cross-link (2'-(S-cysteinyl)-histidine (Cys-His)). Positions 912, 921, 1031, 1035, and 1062 each coordinate Cu cation. 2 disulfides stabilise this stretch: cysteine 1021–cysteine 1088 and cysteine 1178–cysteine 1184. One copy of the WD 2 repeat lies at 1041 to 1082 (AQPYGMASLRYTAFDPLFYLHHSNTDRIWAIWQALQKYRGKP). The functional unit d (wall) stretch occupies residues 1272–1680 (NRIRKNIENL…AHTDDGHTEP (409 aa)). Histidine 1309 is a Cu cation binding site. Residues cysteine 1315 and cysteine 1324 are joined by a disulfide bond. The segment at residues 1325 to 1327 (CVH) is a cross-link (2'-(S-cysteinyl)-histidine (Cys-His)). 5 residues coordinate Cu cation: histidine 1327, histidine 1336, histidine 1440, histidine 1444, and histidine 1471. Intrachain disulfides connect cysteine 1430-cysteine 1497 and cysteine 1585-cysteine 1595. The stretch at 1450-1491 (KGKYSMSNLDYAAFDPVFFLHHATTDRIWAIWQDLQRFRKRP) is one WD 3 repeat. Residue asparagine 1648 is glycosylated (N-linked (GlcNAc...) asparagine). Residues 1681 to 2097 (VMIRKDITQL…HDISSHHLSL (417 aa)) form a functional unit e (wall) region. Cu cation is bound at residue histidine 1721. Residues cysteine 1727 and cysteine 1738 are joined by a disulfide bond. The 2'-(S-cysteinyl)-histidine (Cys-His) cross-link spans 1739–1741 (CVH). Histidine 1741, histidine 1750, histidine 1863, histidine 1867, and histidine 1894 together coordinate Cu cation. 2 cysteine pairs are disulfide-bonded: cysteine 1853–cysteine 1920 and cysteine 2009–cysteine 2015. The WD 4 repeat unit spans residues 1873–1914 (KEPYGIGHLHYASYDPLFYIHHSQTDRIWAIWQSLQRFRGLS). Positions 2098-2517 (NKVRHDLSTL…EDHHSSSMAG (420 aa)) are functional unit f (wall). Histidine 2138 contacts Cu cation. A disulfide bridge connects residues cysteine 2144 and cysteine 2154. A glycan (N-linked (GlcNAc...) asparagine) is linked at asparagine 2145. The segment at residues 2155–2157 (CIH) is a cross-link (2'-(S-cysteinyl)-histidine (Cys-His)). Cu cation contacts are provided by histidine 2157, histidine 2166, histidine 2276, histidine 2280, and histidine 2307. Residues 2163-2199 (PHWHRLYTLQFEQALRRHGSSVAVPYWDWTKPIHNIP) form a WD 5 repeat. Disulfide bonds link cysteine 2266-cysteine 2333 and cysteine 2420-cysteine 2426. Glutamate 2424 contributes to the a divalent metal cation binding site. The tract at residues 2518 to 2921 (HGVRKEINTL…EKHHEDHHED (404 aa)) is functional unit g (internal arc). Histidine 2558 is a binding site for Cu cation. Cysteine 2564 and cysteine 2574 are disulfide-bonded. N-linked (GlcNAc...) asparagine glycosylation is present at asparagine 2571. The 2'-(S-cysteinyl)-histidine (Cys-His) cross-link spans 2575-2577 (CTH). Positions 2577, 2586, 2686, 2690, and 2717 each coordinate Cu cation. 2 disulfides stabilise this stretch: cysteine 2676–cysteine 2743 and cysteine 2830–cysteine 2836. The stretch at 2696–2737 (LTPYGMSTLEYTTYDPLFWLHHANTDRIWAIWQALQEYRGLP) is one WD 6 repeat. Residues 2922–3414 (ILVRKNIHSL…LRIHVHVDDE (493 aa)) form a functional unit h (internal slab) region. Histidine 2962 lines the Cu cation pocket. Cysteine 2968 and cysteine 2978 are oxidised to a cystine. The segment at residues 2979–2981 (CVH) is a cross-link (2'-(S-cysteinyl)-histidine (Cys-His)). Cu cation contacts are provided by histidine 2981, histidine 2990, histidine 3091, histidine 3095, and histidine 3122. Cysteines 3081 and 3148 form a disulfide. The WD 7 repeat unit spans residues 3101-3142 (AEKYSMSTLEYSAFDPYFMIHHASLDKIWIIWQELQKRRVKP). Asparagine 3278 carries N-linked (GlcNAc...) asparagine glycosylation. Cysteines 3367 and 3400 form a disulfide.

Belongs to the tyrosinase family. Hemocyanin subfamily. In terms of assembly, homo-didecamer, with two decamers assembled face-to-face at their open ends. This didecamer form a stable 25 nM cylinder wall. In terms of processing, probably N-glycosylated. Asn-1280 and Asn-2484 are buried deeply in the protein which make them inaccessible for sugar attachment. Asn-3278 N-glycan is likely to represent a diantennate carbohydrate tree. The didecamer is almost evenly tagged by a total of 120 sugar trees. As to expression, hemolymph.

It localises to the secreted. Its subcellular location is the extracellular space. In terms of biological role, hemocyanins are copper-containing oxygen carriers occurring freely dissolved in the hemolymph of many mollusks and arthropods. This Megathura crenulata (Giant keyhole limpet) protein is Hemocyanin 1.